We begin with the raw amino-acid sequence, 125 residues long: Large ribosomal subunit protein bL21 (125 aa).

Belongs to the bacterial ribosomal protein bL21 family. In terms of assembly, part of the 50S ribosomal subunit. Contacts protein L20.

In terms of biological role, this protein binds to 23S rRNA in the presence of protein L20. This Synechococcus sp. (strain CC9902) protein is Large ribosomal subunit protein bL21.